A 382-amino-acid polypeptide reads, in one-letter code: 2-heptyl-3-hydroxy-4(1H)-quinolone synthase (382 aa).

This sequence belongs to the 3-hydroxybenzoate 6-hydroxylase family.

It carries out the reaction 2-heptyl-4(1H)-quinolone + NADH + O2 + H(+) = 2-heptyl-3-hydroxy-4(1H)-quinolone + NAD(+) + H2O. In terms of biological role, involved in the terminal step of the biosynthesis of quinolone which in addition to serve as a potent signal for quorum sensing, chelates iron and promotes the formation of membrane vesicles (MVs). Catalyzes the hydroxylation of 2-heptyl-4-quinolone (C7-HHQ) to yield 2-heptyl-3-hydroxy-4-quinolone (PQS). PqsH is also able to hydroxylate HHQ analogs having alkyl side-chain lengths of 3 (C3-HHQ), 5 (C5-HHQ) and 9 (C9-HHQ) carbons, however catalytic efficiencies are significantly reduced for substrates with alkyl side-chain lengths below 7 carbons. The sequence is that of 2-heptyl-3-hydroxy-4(1H)-quinolone synthase (pqsH) from Pseudomonas aeruginosa (strain UCBPP-PA14).